Reading from the N-terminus, the 517-residue chain is Ribonuclease Y (517 aa).

The chain crosses the membrane as a helical span at residues 1 to 21 (MIESLIALIAAIVGLGIGYLV). Positions 207 to 273 (LINVINIKND…TKVIELLVED (67 aa)) constitute a KH domain. Residues 333 to 426 (ALAHSLEVAH…VCAADTLSAA (94 aa)) form the HD domain.

This sequence belongs to the RNase Y family.

It is found in the cell membrane. In terms of biological role, endoribonuclease that initiates mRNA decay. This is Ribonuclease Y from Campylobacter jejuni subsp. jejuni serotype O:23/36 (strain 81-176).